We begin with the raw amino-acid sequence, 193 residues long: dTTP/UTP pyrophosphatase (193 aa).

The Proton acceptor role is filled by aspartate 77.

The protein belongs to the Maf family. YhdE subfamily. It depends on a divalent metal cation as a cofactor.

Its subcellular location is the cytoplasm. The catalysed reaction is dTTP + H2O = dTMP + diphosphate + H(+). It catalyses the reaction UTP + H2O = UMP + diphosphate + H(+). Nucleoside triphosphate pyrophosphatase that hydrolyzes dTTP and UTP. May have a dual role in cell division arrest and in preventing the incorporation of modified nucleotides into cellular nucleic acids. The polypeptide is dTTP/UTP pyrophosphatase (Parabacteroides distasonis (strain ATCC 8503 / DSM 20701 / CIP 104284 / JCM 5825 / NCTC 11152)).